A 1058-amino-acid polypeptide reads, in one-letter code: Ubiquitin-like modifier-activating enzyme 1 (1058 aa).

The segment at 1 to 46 is disordered; the sequence is MSSSPLSKKRRVSGPDPKPGSNCSPAQSALSEVSSVPTNGMAKNGS. The residue at position 2 (Ser-2) is an N-acetylserine. Residues Ser-4, Ser-13, Ser-21, Ser-24, and Ser-46 each carry the phosphoserine modification. Over residues 21–38 the composition is skewed to polar residues; sequence SNCSPAQSALSEVSSVPT. Phosphotyrosine is present on Tyr-55. 2 repeat units span residues 63-199 and 459-611. A 2 approximate repeats region spans residues 63 to 611; that stretch reads GHEAMKMLQT…GTKGNVQVVI (549 aa). Residues Ala-478, Asp-504, Arg-515, Lys-528, and 576 to 577 each bind ATP; that span reads DN. N6-succinyllysine is present on Lys-528. Cys-632 (glycyl thioester intermediate) is an active-site residue. Position 671 is an N6-acetyllysine (Lys-671). At Thr-800 the chain carries Phosphothreonine. 4 positions are modified to phosphoserine: Ser-810, Ser-816, Ser-820, and Ser-835. Lys-980 is modified (N6-acetyllysine).

Belongs to the ubiquitin-activating E1 family. In terms of assembly, monomer. Interacts with GAN (via BTB domain). ISGylated. As to expression, ubiquitously expressed. In testis, expressed in A spermatogonia and spermatids but at very low levels in pachytene spermatocytes.

It localises to the cytoplasm. The protein localises to the mitochondrion. Its subcellular location is the nucleus. It carries out the reaction ATP + ubiquitin + [E1 ubiquitin-activating enzyme]-L-cysteine = AMP + diphosphate + S-ubiquitinyl-[E1 ubiquitin-activating enzyme]-L-cysteine.. It functions in the pathway protein modification; protein ubiquitination. Functionally, catalyzes the first step in ubiquitin conjugation to mark cellular proteins for degradation through the ubiquitin-proteasome system. Activates ubiquitin by first adenylating its C-terminal glycine residue with ATP, and thereafter linking this residue to the side chain of a cysteine residue in E1, yielding a ubiquitin-E1 thioester and free AMP. Essential for the formation of radiation-induced foci, timely DNA repair and for response to replication stress. Promotes the recruitment of TP53BP1 and BRCA1 at DNA damage sites. The protein is Ubiquitin-like modifier-activating enzyme 1 (Uba1) of Mus musculus (Mouse).